The sequence spans 897 residues: Zinc finger protein zas1 (897 aa).

C2H2-type zinc fingers lie at residues 26 to 50 (FYCT…ERTH) and 56 to 79 (FSCS…QQMH). The C2H2-type 3; atypical zinc finger occupies 93–119 (ASCFLGFCVLAHDYVNLINARHFMIEH).

The protein localises to the nucleus. The sequence is that of Zinc finger protein zas1 (zas1) from Schizosaccharomyces pombe (strain 972 / ATCC 24843) (Fission yeast).